The following is a 396-amino-acid chain: MAKAKFERTKPHVNIGTIGHVDHGKTTLTAAITKVLHDAYPDLNEASAFDEIDKAPEEKARGITINISHVEYQTEKRHYAHVDAPGHADYIKNMITGAAQMDGAILVVAATDGPMPQTREHVLLARQVGVPYILVALNKADMVDDDEIIELVEMEVRELLAAQEFDEDAPVVKVSALKALEGDPEWTKNILELMAAVDESIPDPVRETEKPFLMPVEDVFTITGRGTVVTGRIERGVINVNEDVEIVGIKETKTKTTVTGIEMFRKLLDSGQAGDNVGLLVRGIKREDVERGQVVVKPGTTTPHTEFEGQAYILSKDEGGRHTPFFNNYRPQFYFRTTDVTGVVTLPEGTEMVMPGDNTEMSVKLIQPVAMDEGLRFAIREGGRTVGAGKVTKINK.

In terms of domain architecture, tr-type G spans 10–205 (KPHVNIGTIG…AVDESIPDPV (196 aa)). The tract at residues 19 to 26 (GHVDHGKT) is G1. 19 to 26 (GHVDHGKT) serves as a coordination point for GTP. Mg(2+) is bound at residue Thr26. The G2 stretch occupies residues 62-66 (GITIN). The G3 stretch occupies residues 83-86 (DAPG). Residues 83–87 (DAPGH) and 138–141 (NKAD) contribute to the GTP site. Residues 138 to 141 (NKAD) form a G4 region. The segment at 175-177 (SAL) is G5.

The protein belongs to the TRAFAC class translation factor GTPase superfamily. Classic translation factor GTPase family. EF-Tu/EF-1A subfamily. In terms of assembly, monomer.

It localises to the cytoplasm. The catalysed reaction is GTP + H2O = GDP + phosphate + H(+). Its function is as follows. GTP hydrolase that promotes the GTP-dependent binding of aminoacyl-tRNA to the A-site of ribosomes during protein biosynthesis. This is Elongation factor Tu from Rhodococcus jostii (strain RHA1).